The primary structure comprises 401 residues: 2-amino-3-carboxymuconate-6-semialdehyde decarboxylase (401 aa).

The Zn(2+) site is built by His-18 and His-20. Arg-59 is a binding site for substrate. His-234 and Asp-352 together coordinate Zn(2+).

Belongs to the metallo-dependent hydrolases superfamily. ACMSD family. In terms of assembly, monomer.

It catalyses the reaction 2-amino-3-carboxymuconate 6-semialdehyde + H(+) = 2-aminomuconate 6-semialdehyde + CO2. The protein operates within secondary metabolite metabolism; quinolate metabolism. Functionally, converts alpha-amino-beta-carboxymuconate-epsilon-semialdehyde (ACMS) to alpha-aminomuconate semialdehyde (AMS). This is 2-amino-3-carboxymuconate-6-semialdehyde decarboxylase from Caenorhabditis elegans.